Reading from the N-terminus, the 445-residue chain is Succinate--CoA ligase [ADP-forming] subunit beta, mitochondrial (445 aa).

The N-terminal 17 residues, 1–17 (MLSNIVKKTIQSSKNLK), are a transit peptide targeting the mitochondrion. The ATP-grasp domain occupies 43 to 270 (QKMMKSYGIN…DNAAFRHPDI (228 aa)). ATP contacts are provided by residues Lys80 and 87–89 (GRG). Mg(2+)-binding residues include Asn240 and Asp254. Substrate is bound by residues Asn305 and 362 to 364 (GIM).

Belongs to the succinate/malate CoA ligase beta subunit family. ATP-specific subunit beta subfamily. Heterodimer of an alpha and a beta subunit. The beta subunit determines specificity for ATP. Mg(2+) is required as a cofactor.

The protein resides in the mitochondrion. The catalysed reaction is succinate + ATP + CoA = succinyl-CoA + ADP + phosphate. Its pathway is carbohydrate metabolism; tricarboxylic acid cycle; succinate from succinyl-CoA (ligase route): step 1/1. Its function is as follows. ATP-specific succinyl-CoA synthetase functions in the citric acid cycle (TCA), coupling the hydrolysis of succinyl-CoA to the synthesis of ATP and thus represents the only step of substrate-level phosphorylation in the TCA. The beta subunit provides nucleotide specificity of the enzyme and binds the substrate succinate, while the binding sites for coenzyme A and phosphate are found in the alpha subunit. The sequence is that of Succinate--CoA ligase [ADP-forming] subunit beta, mitochondrial (scsC) from Dictyostelium discoideum (Social amoeba).